The following is a 212-amino-acid chain: Secreted and transmembrane protein 1b (212 aa).

An N-terminal signal peptide occupies residues 1-28 (MLAYSVTSSGLFPRMLWALLLLAASLNA). Residues 29–160 (HNDVWDEPCC…DKPPTAVRTE (132 aa)) are Extracellular-facing. C38 and C55 form a disulfide bridge. N56, N85, N114, and N130 each carry an N-linked (GlcNAc...) asparagine glycan. Residues 161–181 (VIIIIAIATTIIITGIGVFVW) form a helical membrane-spanning segment. At 182–212 (YKQFPVAPQIQMSVPCLIHGSPGIPYLTLPP) the chain is on the cytoplasmic side.

It belongs to the SECTM family. Interacts with CD7.

Its subcellular location is the cell membrane. The protein resides in the secreted. Functionally, may be involved in thymocyte signaling. In Mus musculus (Mouse), this protein is Secreted and transmembrane protein 1b (Sectm1b).